Consider the following 449-residue polypeptide: tRNA-2-methylthio-N(6)-dimethylallyladenosine synthase (449 aa).

The 116-residue stretch at 13-128 folds into the MTTase N-terminal domain; that stretch reads RRIFIETYGC…LPHLIGTVEK (116 aa). [4Fe-4S] cluster is bound by residues Cys22, Cys58, Cys92, Cys166, Cys170, and Cys173. Positions 152-383 constitute a Radical SAM core domain; it reads SRIKISGFIS…ITLQLKISLM (232 aa). Positions 386 to 449 constitute a TRAM domain; the sequence is KENIGKTMEI…AATLFGDPKL (64 aa).

This sequence belongs to the methylthiotransferase family. MiaB subfamily. In terms of assembly, monomer. It depends on [4Fe-4S] cluster as a cofactor.

The protein resides in the cytoplasm. It catalyses the reaction N(6)-dimethylallyladenosine(37) in tRNA + (sulfur carrier)-SH + AH2 + 2 S-adenosyl-L-methionine = 2-methylsulfanyl-N(6)-dimethylallyladenosine(37) in tRNA + (sulfur carrier)-H + 5'-deoxyadenosine + L-methionine + A + S-adenosyl-L-homocysteine + 2 H(+). In terms of biological role, catalyzes the methylthiolation of N6-(dimethylallyl)adenosine (i(6)A), leading to the formation of 2-methylthio-N6-(dimethylallyl)adenosine (ms(2)i(6)A) at position 37 in tRNAs that read codons beginning with uridine. The sequence is that of tRNA-2-methylthio-N(6)-dimethylallyladenosine synthase from Azobacteroides pseudotrichonymphae genomovar. CFP2.